The chain runs to 946 residues: Bifunctional glutamine synthetase adenylyltransferase/adenylyl-removing enzyme (946 aa).

Positions 1-441 (MSLLNDAALH…EFNWVIGDDE (441 aa)) are adenylyl removase. An adenylyl transferase region spans residues 448–946 (DQALSELWAL…VIKIWEKFLD (499 aa)).

This sequence belongs to the GlnE family. It depends on Mg(2+) as a cofactor.

It carries out the reaction [glutamine synthetase]-O(4)-(5'-adenylyl)-L-tyrosine + phosphate = [glutamine synthetase]-L-tyrosine + ADP. It catalyses the reaction [glutamine synthetase]-L-tyrosine + ATP = [glutamine synthetase]-O(4)-(5'-adenylyl)-L-tyrosine + diphosphate. In terms of biological role, involved in the regulation of glutamine synthetase GlnA, a key enzyme in the process to assimilate ammonia. When cellular nitrogen levels are high, the C-terminal adenylyl transferase (AT) inactivates GlnA by covalent transfer of an adenylyl group from ATP to specific tyrosine residue of GlnA, thus reducing its activity. Conversely, when nitrogen levels are low, the N-terminal adenylyl removase (AR) activates GlnA by removing the adenylyl group by phosphorolysis, increasing its activity. The regulatory region of GlnE binds the signal transduction protein PII (GlnB) which indicates the nitrogen status of the cell. The sequence is that of Bifunctional glutamine synthetase adenylyltransferase/adenylyl-removing enzyme from Psychromonas ingrahamii (strain DSM 17664 / CCUG 51855 / 37).